Here is a 544-residue protein sequence, read N- to C-terminus: Prolyl 4-hydroxylase subunit alpha-3 (544 aa).

Positions 1-24 are cleaved as a signal peptide; the sequence is MGPGARLAALLVLLKLGVGDPAAA. One copy of the TPR repeat lies at 227–260; sequence EDALDYLAFACYQVGNVSCALSLSREFLVYSPDN. Residue N242 is glycosylated (N-linked (GlcNAc...) asparagine). Positions 422 to 529 constitute a Fe2OG dioxygenase domain; that stretch reads YAEYLQVVNY…KWVANKWIHE (108 aa). Fe cation contacts are provided by H440 and D442. N482 is a glycosylation site (N-linked (GlcNAc...) asparagine). H510 contacts Fe cation. K520 is a binding site for 2-oxoglutarate.

It belongs to the P4HA family. Heterotetramer of two alpha-3 chains and two beta chains (the beta chain is the multi-functional PDI). The cofactor is Fe(2+). L-ascorbate is required as a cofactor. Post-translationally, N-glycosylation plays no role in the catalytic activity.

The protein resides in the endoplasmic reticulum lumen. It catalyses the reaction L-prolyl-[collagen] + 2-oxoglutarate + O2 = trans-4-hydroxy-L-prolyl-[collagen] + succinate + CO2. In terms of biological role, catalyzes the post-translational formation of 4-hydroxyproline in -Xaa-Pro-Gly- sequences in collagens and other proteins. The sequence is that of Prolyl 4-hydroxylase subunit alpha-3 (P4ha3) from Rattus norvegicus (Rat).